The sequence spans 148 residues: Deoxyuridine 5'-triphosphate nucleotidohydrolase (148 aa).

Substrate-binding positions include arginine 67–glycine 69, asparagine 80, leucine 84–aspartate 86, and methionine 94.

It belongs to the dUTPase family. It depends on Mg(2+) as a cofactor.

The catalysed reaction is dUTP + H2O = dUMP + diphosphate + H(+). It participates in pyrimidine metabolism; dUMP biosynthesis; dUMP from dCTP (dUTP route): step 2/2. Its function is as follows. This enzyme is involved in nucleotide metabolism: it produces dUMP, the immediate precursor of thymidine nucleotides and it decreases the intracellular concentration of dUTP so that uracil cannot be incorporated into DNA. This chain is Deoxyuridine 5'-triphosphate nucleotidohydrolase, found in Burkholderia cenocepacia (strain HI2424).